The following is a 214-amino-acid chain: Transcription factor MYB24 (214 aa).

HTH myb-type domains follow at residues 14–66 (DAEV…LNYL) and 67–121 (RPDV…QKYI). DNA-binding regions (H-T-H motif) lie at residues 42 to 66 (WNSL…LNYL) and 94 to 117 (WSKI…RTKI).

In terms of assembly, interacts (via N-terminus) with TIFY10A/JAZ1, TIFY5A/JAZ8 AND TIFY3A/JAZ11. In terms of tissue distribution, expressed specifically in flowers. Expressed in all four whorls of the flower and in the vascular tissue of stamen filament and sepals. Detected in male and female gametophytes, especially in microspores and ovules. Weakly expressed in petals and the upper part of pistils.

It localises to the nucleus. Its function is as follows. Transcription factor acting redundantly with MYB21 and MYB57 to control stamen filament elongation in the late developed flowers. Contributes with MYB21 to induction of MYB108 by jasmonate. Repressed at the transcript levels by DELLA proteins. In Arabidopsis thaliana (Mouse-ear cress), this protein is Transcription factor MYB24 (MYB24).